Reading from the N-terminus, the 65-residue chain is Large ribosomal subunit protein uL29 (65 aa).

This sequence belongs to the universal ribosomal protein uL29 family.

In Bacteroides thetaiotaomicron (strain ATCC 29148 / DSM 2079 / JCM 5827 / CCUG 10774 / NCTC 10582 / VPI-5482 / E50), this protein is Large ribosomal subunit protein uL29.